The primary structure comprises 211 residues: MQLSLTQARTWKGLLLLVSCMILWISVTPTPYDQMSNEELYDNLLSCSHRTHVVARKMYKILDLNVAERRCFKNKRNNTCHTTSTHTAKTNEDLLKVIISVSNAWIYPLKMLIPAVLTHLGSYDGMMARAIELNYGNQKILEGAKFLLSRIQPGIEENDYPVWSSLKELRSSNKSIHLFAFCKFFYCLRKDTKKIKDYLQILRPNIIKNKW.

The N-terminal stretch at 1–29 (MQLSLTQARTWKGLLLLVSCMILWISVTP) is a signal peptide. Asn-77 and Asn-173 each carry an N-linked (GlcNAc...) asparagine glycan. The cysteines at positions 80 and 187 are disulfide-linked.

The protein belongs to the somatotropin/prolactin family. Expressed exclusively in decidual tissue.

It is found in the secreted. This is Prolactin-3C1 (Prl3c1) from Rattus norvegicus (Rat).